The following is a 289-amino-acid chain: Oxaloacetate decarboxylase 1 (289 aa).

Ser50 is a binding site for substrate. Residue Asp88 coordinates Mg(2+). Positions 159 and 235 each coordinate substrate.

This sequence belongs to the isocitrate lyase/PEP mutase superfamily. Oxaloacetate decarboxylase family. As to quaternary structure, homotetramer; dimer of dimers. The cofactor is Mg(2+).

The enzyme catalyses oxaloacetate + H(+) = pyruvate + CO2. In terms of biological role, catalyzes the decarboxylation of oxaloacetate into pyruvate. Seems to play a role in maintaining cellular concentrations of bicarbonate and pyruvate. The polypeptide is Oxaloacetate decarboxylase 1 (Pseudomonas putida (strain W619)).